A 429-amino-acid chain; its full sequence is 3-phosphoshikimate 1-carboxyvinyltransferase (429 aa).

3-phosphoshikimate-binding residues include Lys-22, Ser-23, and Arg-27. Position 22 (Lys-22) interacts with phosphoenolpyruvate. Phosphoenolpyruvate-binding residues include Gly-94 and Arg-122. The 3-phosphoshikimate site is built by Ser-167, Gln-169, Asp-315, and Lys-342. Gln-169 contributes to the phosphoenolpyruvate binding site. Asp-315 functions as the Proton acceptor in the catalytic mechanism. 2 residues coordinate phosphoenolpyruvate: Arg-346 and Arg-388.

Belongs to the EPSP synthase family. Monomer.

Its subcellular location is the cytoplasm. The catalysed reaction is 3-phosphoshikimate + phosphoenolpyruvate = 5-O-(1-carboxyvinyl)-3-phosphoshikimate + phosphate. The protein operates within metabolic intermediate biosynthesis; chorismate biosynthesis; chorismate from D-erythrose 4-phosphate and phosphoenolpyruvate: step 6/7. Its function is as follows. Catalyzes the transfer of the enolpyruvyl moiety of phosphoenolpyruvate (PEP) to the 5-hydroxyl of shikimate-3-phosphate (S3P) to produce enolpyruvyl shikimate-3-phosphate and inorganic phosphate. This is 3-phosphoshikimate 1-carboxyvinyltransferase from Geobacter metallireducens (strain ATCC 53774 / DSM 7210 / GS-15).